Here is a 217-residue protein sequence, read N- to C-terminus: CD99 antigen-like protein 2 (217 aa).

The first 25 residues, 1–25 (MVAWRWACLICLAFSLTTLVQRGSG), serve as a signal peptide directing secretion. Residues 26–141 (DTGGFRLEDA…DDSGMSAETG (116 aa)) are Extracellular-facing. The segment at 36 to 136 (VEGTSSVKQR…GGDNSDDSGM (101 aa)) is disordered. The segment covering 50 to 64 (TTTTRRPGATRAPAK) has biased composition (low complexity). Positions 70 to 82 (AEDDFNLADALDD) are enriched in acidic residues. Over residues 83 to 92 (QNDRDHDRKK) the composition is skewed to basic and acidic residues. Ser-134 is a glycosylation site (O-linked (Xyl...) (chondroitin sulfate) serine). A helical transmembrane segment spans residues 142-162 (TIAGVASALAMALIGAVSSYI). Topologically, residues 163 to 217 (SYQQKKFCFSIQQGLNADYVKGENLEAVVCEEPQVKYSALQTQSTEPPPPEPPRI) are cytoplasmic.

This sequence belongs to the CD99 family. Post-translationally, O-glycosylated.

Its subcellular location is the cell membrane. The protein resides in the cell junction. The protein localises to the secreted. In terms of biological role, plays a role in a late step of leukocyte extravasation helping cells to overcome the endothelial basement membrane. Acts at the same site as, but independently of, PECAM1. Homophilic adhesion molecule, but these interactions may not be required for cell aggregation. The chain is CD99 antigen-like protein 2 (CD99L2) from Bos taurus (Bovine).